Reading from the N-terminus, the 160-residue chain is GPI-anchored protein LLG3 (160 aa).

Residues 1–23 (MKITHHCLVSLLSILLLSGFAFS) form the signal peptide. N-linked (GlcNAc...) asparagine glycosylation occurs at N56. The GPI-anchor amidated serine moiety is linked to residue S137. A propeptide spans 138–160 (HASIPLVSTHVLLITVSILFHLF) (removed in mature form).

In terms of tissue distribution, expressed in pollen, pollen tubes, sporophytic pistil tissues, in the early stages of female gametophyte development, and in unfertilized, mature ovules.

Its subcellular location is the cell membrane. The polypeptide is GPI-anchored protein LLG3 (Arabidopsis thaliana (Mouse-ear cress)).